Consider the following 79-residue polypeptide: Sec-independent protein translocase protein TatA (79 aa).

Residues 1–21 (MGGFTSIWHWVIVLLVIVLLF) form a helical membrane-spanning segment. The tract at residues 48 to 79 (EEEAKNEPKTLDAQATQTKAHESSEIKSKQES) is disordered. Over residues 66-79 (KAHESSEIKSKQES) the composition is skewed to basic and acidic residues.

Belongs to the TatA/E family. The Tat system comprises two distinct complexes: a TatABC complex, containing multiple copies of TatA, TatB and TatC subunits, and a separate TatA complex, containing only TatA subunits. Substrates initially bind to the TatABC complex, which probably triggers association of the separate TatA complex to form the active translocon.

The protein resides in the cell inner membrane. Part of the twin-arginine translocation (Tat) system that transports large folded proteins containing a characteristic twin-arginine motif in their signal peptide across membranes. TatA could form the protein-conducting channel of the Tat system. This chain is Sec-independent protein translocase protein TatA, found in Helicobacter pylori (strain P12).